Here is a 2225-residue protein sequence, read N- to C-terminus: Multifunctional protein CAD (2225 aa).

An N-acetylalanine modification is found at Ala-2. Positions 2 to 365 are GATase (Glutamine amidotransferase); that stretch reads AALVLEDGSV…TVREAAAGNI (364 aa). 3 residues coordinate L-glutamine: Ser-44, Gly-222, and Gly-224. Residues 177–363 form the Glutamine amidotransferase type-1 domain; the sequence is RICALDCGLK…LETVREAAAG (187 aa). The active-site Nucleophile; for GATase activity is Cys-252. L-glutamine contacts are provided by Leu-253, Gln-256, Asn-294, Gly-296, and Phe-297. Active-site for GATase activity residues include His-336 and Glu-338. The linker stretch occupies residues 366–394; sequence GGQTVRERLAQRLCPPELPIPGSGLPPPR. The interval 395 to 933 is CPSase A; the sequence is KVLILGSGGL…NTHDLDFRAP (539 aa). The segment at 395 to 1455 is CPSase (Carbamoyl-phosphate synthase); that stretch reads KVLILGSGGL…APPLKVHVDC (1061 aa). The residue at position 456 (Thr-456) is a Phosphothreonine; by MAPK1. Residues Arg-515, Arg-555, Gly-561, Gly-562, Lys-592, Glu-599, Gly-625, Ile-626, His-627, Gln-668, and Glu-682 each contribute to the ATP site. An ATP-grasp 1 domain is found at 519–711; that stretch reads AARMAEIGEH…LAYVAAKLAL (193 aa). The Mg(2+) site is built by Gln-668, Glu-682, and Asn-684. Gln-668, Glu-682, and Asn-684 together coordinate Mn(2+). Residue Lys-747 is modified to N6-acetyllysine. Residues 934 to 1455 are CPSase B; that stretch reads HVLVLGSGVY…APPLKVHVDC (522 aa). Ser-1038 is modified (phosphoserine). The region spanning 1052 to 1243 is the ATP-grasp 2 domain; the sequence is SRLLDTIGIS…LVALATRIIM (192 aa). Residues Arg-1088, Lys-1127, Ile-1129, Glu-1134, Gly-1159, Val-1160, His-1161, Ser-1162, Gln-1202, and Glu-1214 each coordinate ATP. Mg(2+)-binding residues include Gln-1202, Glu-1214, and Asn-1216. The Mn(2+) site is built by Gln-1202, Glu-1214, and Asn-1216. An MGS-like domain is found at 1308–1462; it reads FKIPEKNILL…VDCMTSQKLV (155 aa). Ser-1406 is subject to Phosphoserine; by PKA. Lys-1411 is subject to N6-acetyllysine. The tract at residues 1456-1788 is DHOase (dihydroorotase); the sequence is MTSQKLVRLP…VKGTVRRVVL (333 aa). Residues His-1471 and His-1473 each coordinate Zn(2+). (S)-dihydroorotate-binding residues include Arg-1475 and Asn-1505. The Zn(2+) site is built by Lys-1556, His-1590, Cys-1613, His-1614, and Glu-1637. N6-carboxylysine is present on Lys-1556. Arg-1661 is a binding site for (S)-dihydroorotate. Asp-1686 provides a ligand contact to Zn(2+). Asp-1686 acts as the For DHOase activity in catalysis. (S)-dihydroorotate is bound by residues His-1690 and Pro-1702. The linker stretch occupies residues 1789–1917; that stretch reads RGEVAYIDGQ…GLLHPQMSPL (129 aa). Residues 1815-1885 are disordered; it reads GVVPQPPPST…VVEPELMGTP (71 aa). Residues 1825 to 1834 show a composition bias toward low complexity; sequence PATTEITTTP. The residue at position 1859 (Ser-1859) is a Phosphoserine. Residues 1866–1878 are compositionally biased toward basic and acidic residues; sequence EEPKEKPPRKVVE. The residue at position 1884 (Thr-1884) is a Phosphothreonine. A phosphoserine mark is found at Ser-1900 and Ser-1938. The interval 1918 to 2225 is ATCase (Aspartate transcarbamylase); the sequence is LHSLVGQHIL…ALLATVLGRF (308 aa). Carbamoyl phosphate-binding residues include Arg-1975 and Thr-1976. Residue Lys-2003 coordinates L-aspartate. Carbamoyl phosphate is bound by residues Arg-2024, His-2052, and Gln-2055. Residues Arg-2085 and Arg-2146 each contribute to the L-aspartate site. The carbamoyl phosphate site is built by Met-2185 and Pro-2186.

In the N-terminal section; belongs to the CarA family. The protein in the 2nd section; belongs to the CarB family. This sequence in the 3rd section; belongs to the metallo-dependent hydrolases superfamily. DHOase family. CAD subfamily. It in the C-terminal section; belongs to the aspartate/ornithine carbamoyltransferase superfamily. ATCase family. As to quaternary structure, homohexamer. Interacts with CIPC. Zn(2+) serves as cofactor. Mg(2+) is required as a cofactor. The cofactor is Mn(2+). Post-translationally, activated by MAP kinase (Erk1/2) phosphorylation just prior to the S phase of the cell cycle, when the demand for pyrimidine nucleotides is greatest, and down-regulated as the cells emerge from S phase by protein kinase A (PKA) phosphorylation. Phosphorylation at Ser-1859 by RPS6KB1 downstream of MTOR promotes oligomerization and stimulates dihydroorotase activity. Phosphorylation at Ser-1406 reduces sensitivity to feedback inhibition by UTP.

The protein localises to the cytoplasm. It is found in the nucleus. The catalysed reaction is hydrogencarbonate + L-glutamine + 2 ATP + H2O = carbamoyl phosphate + L-glutamate + 2 ADP + phosphate + 2 H(+). It carries out the reaction L-glutamine + H2O = L-glutamate + NH4(+). The enzyme catalyses hydrogencarbonate + NH4(+) + 2 ATP = carbamoyl phosphate + 2 ADP + phosphate + 2 H(+). It catalyses the reaction carbamoyl phosphate + L-aspartate = N-carbamoyl-L-aspartate + phosphate + H(+). The catalysed reaction is (S)-dihydroorotate + H2O = N-carbamoyl-L-aspartate + H(+). It functions in the pathway pyrimidine metabolism; UMP biosynthesis via de novo pathway; (S)-dihydroorotate from bicarbonate: step 1/3. Its pathway is pyrimidine metabolism; UMP biosynthesis via de novo pathway; (S)-dihydroorotate from bicarbonate: step 2/3. It participates in pyrimidine metabolism; UMP biosynthesis via de novo pathway; (S)-dihydroorotate from bicarbonate: step 3/3. Allosterically regulated and controlled by phosphorylation. 5-phosphoribose 1-diphosphate (PRPP) is an activator while UMP and UTP are inhibitors of the CPSase reaction. Its function is as follows. Multifunctional protein that encodes the first 3 enzymatic activities of the de novo pyrimidine pathway: carbamoylphosphate synthetase (CPSase; EC 6.3.5.5), aspartate transcarbamylase (ATCase; EC 2.1.3.2) and dihydroorotase (DHOase; EC 3.5.2.3). The CPSase-function is accomplished in 2 steps, by a glutamine-dependent amidotransferase activity (GATase) that binds and cleaves glutamine to produce ammonia, followed by an ammonium-dependent carbamoyl phosphate synthetase, which reacts with the ammonia, hydrogencarbonate and ATP to form carbamoyl phosphate. The endogenously produced carbamoyl phosphate is sequestered and channeled to the ATCase active site. ATCase then catalyzes the formation of carbamoyl-L-aspartate from L-aspartate and carbamoyl phosphate. In the last step, DHOase catalyzes the cyclization of carbamoyl aspartate to dihydroorotate. The polypeptide is Multifunctional protein CAD (Cad) (Mus musculus (Mouse)).